A 402-amino-acid chain; its full sequence is MGFFRQLFSLSLCALSLAIPSKLIGLENTQDVIPNSYIVVMKSTISEAEFQTHQAWASKIHRRNLGERDGTLGGLDGLKTTFEFEGLKGYSGAFDKRTIELISRNPAVDYVEVDRVVKLDAITTQRNAPSWGLGRISHKSAGSSDFVFDDSAGSGITIYGVDTGIDIKHPEFSGRATWGTNTVDNEDTDQNGHGTHTAGTFAGATYGIAKKANVIAVKVLNAQGTGSTSGVIQGIQWCTDHAGRNGLRGKAAMNLSLGIRGSTVFNRVAEAAQQSGIFLAVAAGNDGTDAAQFSPASARGVCTAAATNSQDAATSWSNYGSVVAVYGPGADIVSAYPNEDTATLSGTSMASPHVCGVGAYLMALEGIGPDKVCDRIKELAVESVTNQKPNTTRKLLYNGSGA.

The signal sequence occupies residues 1–20 (MGFFRQLFSLSLCALSLAIP). Positions 21–120 (SKLIGLENTQ…VEVDRVVKLD (100 aa)) are excised as a propeptide. The Inhibitor I9 domain occupies 36–119 (SYIVVMKSTI…YVEVDRVVKL (84 aa)). The region spanning 130–402 (SWGLGRISHK…RKLLYNGSGA (273 aa)) is the Peptidase S8 domain. Active-site charge relay system residues include aspartate 162 and histidine 193. An N-linked (GlcNAc...) asparagine glycan is attached at asparagine 254. Residue serine 348 is the Charge relay system of the active site. Asparagine 390 and asparagine 398 each carry an N-linked (GlcNAc...) asparagine glycan.

Belongs to the peptidase S8 family.

Its subcellular location is the secreted. Its function is as follows. Secreted subtilisin-like serine protease with keratinolytic activity that contributes to pathogenicity. The protein is Subtilisin-like protease 9 (SUB9) of Arthroderma benhamiae (strain ATCC MYA-4681 / CBS 112371) (Trichophyton mentagrophytes).